Consider the following 176-residue polypeptide: Inner membrane-spanning protein YciB (176 aa).

6 consecutive transmembrane segments (helical) span residues 3–23 (FLFD…WGIF), 24–44 (TATA…AFRH), 49–69 (TMLW…LVLH), 81–101 (LYWL…NNLI), 119–139 (LNVA…YVVH), and 149–169 (FKLF…SLWL).

It belongs to the YciB family.

Its subcellular location is the cell inner membrane. Its function is as follows. Plays a role in cell envelope biogenesis, maintenance of cell envelope integrity and membrane homeostasis. The chain is Inner membrane-spanning protein YciB from Burkholderia ambifaria (strain MC40-6).